Here is a 633-residue protein sequence, read N- to C-terminus: Chaperone protein dnaK2 (633 aa).

T197 carries the post-translational modification Phosphothreonine; by autocatalysis. The segment at 600–633 is disordered; that stretch reads SNAASQAADGTSSESNNSTEGNDDVIDAEFTESK. Positions 608–619 are enriched in low complexity; it reads DGTSSESNNSTE. A compositionally biased stretch (acidic residues) spans 620-633; that stretch reads GNDDVIDAEFTESK.

The protein belongs to the heat shock protein 70 family.

Acts as a chaperone. This is Chaperone protein dnaK2 (dnaK2) from Prochlorococcus marinus (strain SARG / CCMP1375 / SS120).